The following is a 310-amino-acid chain: Porphobilinogen deaminase (310 aa).

Cysteine 242 bears the S-(dipyrrolylmethanemethyl)cysteine mark.

It belongs to the HMBS family. Monomer. The cofactor is dipyrromethane.

It catalyses the reaction 4 porphobilinogen + H2O = hydroxymethylbilane + 4 NH4(+). The protein operates within porphyrin-containing compound metabolism; protoporphyrin-IX biosynthesis; coproporphyrinogen-III from 5-aminolevulinate: step 2/4. Tetrapolymerization of the monopyrrole PBG into the hydroxymethylbilane pre-uroporphyrinogen in several discrete steps. The polypeptide is Porphobilinogen deaminase (Alcanivorax borkumensis (strain ATCC 700651 / DSM 11573 / NCIMB 13689 / SK2)).